The sequence spans 128 residues: Fluoride-specific ion channel FluC (128 aa).

4 helical membrane-spanning segments follow: residues 8–28, 38–58, 71–91, and 103–123; these read IIFI…LGLL, LGTL…LAFF, FFVT…AEVI, and LMLA…GVFI. Gly-78 and Thr-81 together coordinate Na(+).

Belongs to the fluoride channel Fluc/FEX (TC 1.A.43) family.

It is found in the cell inner membrane. It catalyses the reaction fluoride(in) = fluoride(out). Its activity is regulated as follows. Na(+) is not transported, but it plays an essential structural role and its presence is essential for fluoride channel function. Functionally, fluoride-specific ion channel. Important for reducing fluoride concentration in the cell, thus reducing its toxicity. This chain is Fluoride-specific ion channel FluC, found in Pasteurella multocida (strain Pm70).